Reading from the N-terminus, the 163-residue chain is uncharacterized protein (163 aa).

The interval 30-163 is disordered; it reads GNENTSVSSD…IYKKLGKKKR (134 aa). Over residues 88–118 the composition is skewed to basic and acidic residues; that stretch reads ERQLQKKKEAEKIEGGKNHDNLKRKLNKVGD. Residues 119–133 show a composition bias toward acidic residues; the sequence is ELNEQQSDTDDDDDD. Phosphoserine is present on Ser125. Position 127 is a phosphothreonine (Thr127).

Its subcellular location is the nucleus. The protein localises to the nucleolus. This is an uncharacterized protein from Schizosaccharomyces pombe (strain 972 / ATCC 24843) (Fission yeast).